The chain runs to 260 residues: MQLTGASMFLVWVGLLSWVSCRVDASEGFPSPLKRCKLQDESCLLAQAQTFFQAFKNGIPERQVAALEPIALGTMFIESGGHSESIKFKLTMSDAKLYNLANSMMVKSLKGFTKDLTRPLKLTLLLDNPELEVRAKYDVDGKLLILPIVSKGDLTIRLNDVHTKVWITAEPVKRSDGHTYLNITDYKTATKIKGGHFDLSNLFNDNKELRDSTLKVLNQEWSTLALDVQPKINEACAKAFSAIVQSLWANIPYDEFFEKE.

An N-terminal signal peptide occupies residues 1–25 (MQLTGASMFLVWVGLLSWVSCRVDA).

It belongs to the TO family. In terms of tissue distribution, epidermis of newly eclosed adults.

Functionally, component of the circadian clock or downstream effector of clock function. Required for suppressing daytime sleep (siesta) under ambient environmental temperatures. Part of a heat avoidance mechanism that modulates daytime sleep behavior under different environmental temperatures to minimize the risk of heat exposure. Under cooler ambient temperatures, suppresses daytime sleep (siesta) and thus allows for longer periods of daytime activity. In Drosophila melanogaster (Fruit fly), this protein is Circadian clock-controlled protein daywake.